The chain runs to 1565 residues: Major cell-surface adhesin PAc (1565 aa).

The signal sequence occupies residues 1 to 38 (MKVKKTYGFRKSKISKTLCGAVLGTVAAVSVAGQKVFA). The span at 42–54 (TTTSDVDTKVVGT) shows a compositional bias: low complexity. The disordered stretch occupies residues 42–81 (TTTSDVDTKVVGTQTGNPATNLPEAQGSASKEAEQSQTKL). Basic and acidic residues predominate over residues 72 to 81 (KEAEQSQTKL). 4 Ag I/II A repeats span residues 146–220 (KKTT…QKTN), 221–302 (AANQ…QEAN), 303–384 (AANE…KKAN), and 385–466 (AANE…QKDL). The interval 203-448 (EAKLAQYQAD…KRNADAKADY (246 aa)) is heptad repeats of Y-[EQ]-X-X-L-A-X. The segment at 461–834 (KYQKDLADYP…VNVPKVTKEK (374 aa)) is V-region (lectin-like). Disordered stretches follow at residues 827–985 (VPKV…PTPP) and 1486–1511 (NTVK…PRTS). Residues 848-887 (TYETEKPLKPAPVAPNYEKEPTPPTRTPDQAEPNKPTPPT) form a P1 repeat. One copy of the P2 repeat lies at 888-926 (YETEKPLEPAPVEPSYEAEPTPPTRTPDQAEPNKPTPPT). Residues 927–964 (YETEKPLEPAPVEPSYEAEPTPPTPTPDQPEPNKPVEP) form a P3 repeat. Positions 946-961 (PTPPTPTPDQPEPNKP) are enriched in pro residues. The LPXTG sorting signal motif lies at 1532 to 1536 (LPNTG). Thr1535 carries the pentaglycyl murein peptidoglycan amidated threonine modification. The propeptide at 1536–1565 (GVTNNAYMPLLGIIGLVTSFSLLGLKAKKD) is removed by sortase.

The protein belongs to the antigen I/II family.

Its subcellular location is the secreted. It localises to the cell wall. Functionally, surface protein antigen implicated in dental caries. This is Major cell-surface adhesin PAc from Streptococcus mutans.